A 364-amino-acid chain; its full sequence is Chorismate synthase (364 aa).

NADP(+)-binding residues include Arg48 and Arg54. Residues 125–127, 238–239, Gly278, 293–297, and Arg319 contribute to the FMN site; these read RSS, NA, and KPTSS.

It belongs to the chorismate synthase family. In terms of assembly, homotetramer. The cofactor is FMNH2.

It carries out the reaction 5-O-(1-carboxyvinyl)-3-phosphoshikimate = chorismate + phosphate. It participates in metabolic intermediate biosynthesis; chorismate biosynthesis; chorismate from D-erythrose 4-phosphate and phosphoenolpyruvate: step 7/7. Functionally, catalyzes the anti-1,4-elimination of the C-3 phosphate and the C-6 proR hydrogen from 5-enolpyruvylshikimate-3-phosphate (EPSP) to yield chorismate, which is the branch point compound that serves as the starting substrate for the three terminal pathways of aromatic amino acid biosynthesis. This reaction introduces a second double bond into the aromatic ring system. The sequence is that of Chorismate synthase from Marinobacter nauticus (strain ATCC 700491 / DSM 11845 / VT8) (Marinobacter aquaeolei).